A 303-amino-acid polypeptide reads, in one-letter code: Sodium/potassium-transporting ATPase subunit beta-1 (303 aa).

Residues 1 to 34 are Cytoplasmic-facing; that stretch reads MPAATKDSDGGWKKFLWNSEKKEFLGRTGGSWAK. The helical; Signal-anchor for type II membrane protein transmembrane segment at 35 to 55 threads the bilayer; it reads ILLFYVIFYGCLAGIFIGTIQ. The Extracellular portion of the chain corresponds to 56-303; that stretch reads ALLLTINDFK…FDVKFTINES (248 aa). N-linked (GlcNAc...) asparagine glycosylation occurs at N113. 2 disulfide bridges follow: C126–C149 and C159–C175. N194 and N264 each carry an N-linked (GlcNAc...) asparagine glycan. C214 and C275 form a disulfide bridge.

It belongs to the X(+)/potassium ATPases subunit beta family. In terms of assembly, the sodium/potassium-transporting ATPase is composed of a catalytic alpha subunit, an auxiliary non-catalytic beta subunit and an additional regulatory subunit. As to expression, detected in all tissues except liver and cardiac muscle. Highest levels found in intestine, ovary and kidney with marginally lower levels in brain, spleen, esophagus, eye and pancreas, intermediate levels in gill and low levels in white and red skeletal muscle.

Its subcellular location is the cell membrane. In terms of biological role, this is the non-catalytic component of the active enzyme, which catalyzes the hydrolysis of ATP coupled with the exchange of Na(+) and K(+) ions across the plasma membrane. The beta subunit regulates, through assembly of alpha/beta heterodimers, the number of sodium pumps transported to the plasma membrane. This is Sodium/potassium-transporting ATPase subunit beta-1 (atp1b1) from Anguilla anguilla (European freshwater eel).